The following is a 296-amino-acid chain: MMETNPQTSEGAGKAQSSAKKVKNRRKLRRTVAGAMALTIGLSGAGILATAITPDAQIATAQRDDQALIAEGKDLYDVACITCHGMNLQGVQDRGPSLIGVGEGAVYFQVHSGRMPMQRNEAQASRKTPRYTEAQTLAIAAYVAANGGGPGLVYNEDGTLAMEELRGSNFDGQIDPLDVSRGGDLFRLNCASCHNFTGRGGALSSGKYAPVLDPANEQEIYQAMLTGPQNMPKFSDRQLSADEKKDIIAFIKSTKETPSPGGYSLGGLGPVSEGLFMWGIGIMVLIAAAMWIGSRS.

The segment covering 1-19 (MMETNPQTSEGAGKAQSSA) has biased composition (polar residues). The interval 1 to 27 (MMETNPQTSEGAGKAQSSAKKVKNRRK) is disordered. Residues 32–52 (VAGAMALTIGLSGAGILATAI) traverse the membrane as a helical segment. Cytochrome c domains follow at residues 67-147 (ALIA…AANG) and 177-255 (LDVS…KSTK). Residues cysteine 80, cysteine 83, histidine 84, cysteine 190, cysteine 193, and histidine 194 each coordinate heme c. A helical transmembrane segment spans residues 274–294 (GLFMWGIGIMVLIAAAMWIGS).

In terms of assembly, the cytochrome bc1 complex is composed of a cytochrome b (QcrB), the Rieske iron-sulfur protein (QcrA) and a diheme cytochrome c (QcrC) subunit. The bc1 complex forms a supercomplex with cytochrome c oxidase (cytochrome aa3). In terms of processing, binds 2 heme c groups covalently per subunit.

It is found in the cell membrane. It catalyses the reaction a quinol + 2 Fe(III)-[cytochrome c](out) = a quinone + 2 Fe(II)-[cytochrome c](out) + 2 H(+)(out). In terms of biological role, cytochrome c1 subunit of the cytochrome bc1 complex, an essential component of the respiratory electron transport chain required for ATP synthesis. The bc1 complex catalyzes the oxidation of menaquinol and the reduction of cytochrome c in the respiratory chain. The bc1 complex operates through a Q-cycle mechanism that couples electron transfer to generation of the proton gradient that drives ATP synthesis. In Corynebacterium efficiens (strain DSM 44549 / YS-314 / AJ 12310 / JCM 11189 / NBRC 100395), this protein is Cytochrome bc1 complex cytochrome c subunit (qcrC).